Consider the following 132-residue polypeptide: Small ribosomal subunit protein uS8 (132 aa).

Belongs to the universal ribosomal protein uS8 family. In terms of assembly, part of the 30S ribosomal subunit. Contacts proteins S5 and S12.

One of the primary rRNA binding proteins, it binds directly to 16S rRNA central domain where it helps coordinate assembly of the platform of the 30S subunit. This chain is Small ribosomal subunit protein uS8, found in Mycobacterium marinum (strain ATCC BAA-535 / M).